We begin with the raw amino-acid sequence, 72 residues long: Gas vesicle protein A (72 aa).

Belongs to the gas vesicle GvpA family. The gas vesicle shell is 2 nm thick and consists of a single layer of this protein. It forms helical ribs nearly perpendicular to the long axis of the vesicle.

The protein localises to the gas vesicle shell. In terms of biological role, gas vesicles are hollow, gas filled proteinaceous nanostructures found in some microorganisms. During planktonic growth they allow positioning of the organism at a favorable depth for light or nutrient acquisition. GvpA forms the protein shell. In Synechococcus sp. (strain JA-3-3Ab) (Cyanobacteria bacterium Yellowstone A-Prime), this protein is Gas vesicle protein A.